Reading from the N-terminus, the 359-residue chain is UDP-3-O-acylglucosamine N-acyltransferase (359 aa).

Catalysis depends on H256, which acts as the Proton acceptor.

The protein belongs to the transferase hexapeptide repeat family. LpxD subfamily. In terms of assembly, homotrimer.

The enzyme catalyses a UDP-3-O-[(3R)-3-hydroxyacyl]-alpha-D-glucosamine + a (3R)-hydroxyacyl-[ACP] = a UDP-2-N,3-O-bis[(3R)-3-hydroxyacyl]-alpha-D-glucosamine + holo-[ACP] + H(+). Its pathway is bacterial outer membrane biogenesis; LPS lipid A biosynthesis. Its function is as follows. Catalyzes the N-acylation of UDP-3-O-acylglucosamine using 3-hydroxyacyl-ACP as the acyl donor. Is involved in the biosynthesis of lipid A, a phosphorylated glycolipid that anchors the lipopolysaccharide to the outer membrane of the cell. The chain is UDP-3-O-acylglucosamine N-acyltransferase from Rhodopseudomonas palustris (strain BisB5).